Reading from the N-terminus, the 611-residue chain is Alpha-1,2-mannosyltransferase ALG9 (611 aa).

Positions 1 to 10 (MASRGARQRL) are enriched in basic residues. The segment at 1–23 (MASRGARQRLKGSGASSGDTAPA) is disordered. Residues 1 to 135 (MASRGARQRL…FHARILQTNK (135 aa)) lie on the Lumenal side of the membrane. The N-linked (GlcNAc...) asparagine glycan is linked to asparagine 77. A helical membrane pass occupies residues 136–156 (ILVFYFLRCLLAFVSCICELY). The Cytoplasmic segment spans residues 157–171 (FYKAVCKKFGLHVSR). The chain crosses the membrane as a helical span at residues 172–192 (MMLAFLVLSTGMFCSSSAFLP). The Lumenal segment spans residues 193 to 213 (SSFCMYTTLIAMTGWYMDKTS). A helical transmembrane segment spans residues 214–234 (IAVLGVAAGAILGWPFSAALG). Residues 235 to 249 (LPIAFDLLVMKHRWK) are Cytoplasmic-facing. The chain crosses the membrane as a helical span at residues 250–270 (SFFHWSLMALILFLVPVVVID). Residues 271-304 (SYYYGKLVIAPLNIVLYNVFTPHGPDLYGTEPWY) are Lumenal-facing. Residues 305–325 (FYLINGFLNFNVAFALALLVL) form a helical membrane-spanning segment. Topologically, residues 326–342 (PLTSLMEYLLQRFHVQN) are cytoplasmic. A helical transmembrane segment spans residues 343-363 (LGHPYWLTLAPMYIWFIIFFI). Topologically, residues 364 to 370 (QPHKEER) are lumenal. A helical membrane pass occupies residues 371 to 391 (FLFPVYPLICLCGAVALSALQ). Residues 392 to 405 (KCYHFVFQRYRLEH) are Cytoplasmic-facing. The chain crosses the membrane as a helical span at residues 406-426 (YTVTSNWLALGTVFLFGLLSF). The Lumenal segment spans residues 427-611 (SRSVALFRGY…AKQIRKKSGG (185 aa)). The N-linked (GlcNAc...) asparagine glycan is linked to asparagine 593.

This sequence belongs to the glycosyltransferase 22 family. As to expression, ubiquitously expressed; with highest levels in heart, liver and pancreas.

It is found in the endoplasmic reticulum membrane. The catalysed reaction is an alpha-D-Man-(1-&gt;2)-alpha-D-Man-(1-&gt;2)-alpha-D-Man-(1-&gt;3)-[alpha-D-Man-(1-&gt;3)-alpha-D-Man-(1-&gt;6)]-beta-D-Man-(1-&gt;4)-beta-D-GlcNAc-(1-&gt;4)-alpha-D-GlcNAc-diphospho-di-trans,poly-cis-dolichol + a di-trans,poly-cis-dolichyl beta-D-mannosyl phosphate = an alpha-D-Man-(1-&gt;2)-alpha-D-Man-(1-&gt;2)-alpha-D-Man-(1-&gt;3)-[alpha-D-Man-(1-&gt;2)-alpha-D-Man-(1-&gt;3)-alpha-D-Man-(1-&gt;6)]-beta-D-Man-(1-&gt;4)-beta-D-GlcNAc-(1-&gt;4)-alpha-D-GlcNAc-diphospho-di-trans,poly-cis-dolichol + a di-trans,poly-cis-dolichyl phosphate + H(+). It carries out the reaction an alpha-D-Man-(1-&gt;2)-alpha-D-Man-(1-&gt;2)-alpha-D-Man-(1-&gt;3)-[alpha-D-Man-(1-&gt;2)-alpha-D-Man-(1-&gt;3)-[alpha-D-Man-(1-&gt;6)]-alpha-D-Man-(1-&gt;6)]-beta-D-Man-(1-&gt;4)-beta-D-GlcNAc-(1-&gt;4)-alpha-D-GlcNAc-diphospho-di-trans,poly-cis-dolichol + a di-trans,poly-cis-dolichyl beta-D-mannosyl phosphate = an alpha-D-Man-(1-&gt;2)-alpha-D-Man-(1-&gt;2)-alpha-D-Man-(1-&gt;3)-[alpha-D-Man-(1-&gt;2)-alpha-D-Man-(1-&gt;3)-[alpha-D-Man-(1-&gt;2)-alpha-D-Man-(1-&gt;6)]-alpha-D-Man-(1-&gt;6)]-beta-D-Man-(1-&gt;4)-beta-D-GlcNAc-(1-&gt;4)-alpha-D-GlcNAc-diphospho-di-trans,poly-cis-dolichol + a di-trans,poly-cis-dolichyl phosphate + H(+). It participates in protein modification; protein glycosylation. Its function is as follows. Mannosyltransferase that operates in the biosynthetic pathway of dolichol-linked oligosaccharides, the glycan precursors employed in protein asparagine (N)-glycosylation. The assembly of dolichol-linked oligosaccharides begins on the cytosolic side of the endoplasmic reticulum membrane and finishes in its lumen. The sequential addition of sugars to dolichol pyrophosphate produces dolichol-linked oligosaccharides containing fourteen sugars, including two GlcNAcs, nine mannoses and three glucoses. Once assembled, the oligosaccharide is transferred from the lipid to nascent proteins by oligosaccharyltransferases. In the lumen of the endoplasmic reticulum, catalyzes the addition of the seventh and ninth alpha-1,2-linked mannose residues to Man(6)GlcNAc(2)-PP-dolichol and Man(8)GlcNAc(2)-PP-dolichol respectively. The polypeptide is Alpha-1,2-mannosyltransferase ALG9 (Homo sapiens (Human)).